The sequence spans 325 residues: BES1/BZR1 homolog protein 4 (325 aa).

The tract at residues M1–R21 is disordered. The interval R6–T89 is required for DNA-binding. T169 is modified (phosphothreonine). The disordered stretch occupies residues E304 to R325.

Belongs to the BZR/LAT61 family. Post-translationally, phosphorylated. Phosphorylation increases protein degradation.

The sequence is that of BES1/BZR1 homolog protein 4 (BEH4) from Arabidopsis thaliana (Mouse-ear cress).